The following is a 565-amino-acid chain: Adenine deaminase (565 aa).

The protein belongs to the metallo-dependent hydrolases superfamily. Adenine deaminase family. The cofactor is Mn(2+).

The catalysed reaction is adenine + H2O + H(+) = hypoxanthine + NH4(+). This chain is Adenine deaminase, found in Gluconobacter oxydans (strain 621H) (Gluconobacter suboxydans).